An 845-amino-acid chain; its full sequence is Alanine--tRNA ligase (845 aa).

The Zn(2+) site is built by His552, His556, Cys653, and His657.

It belongs to the class-II aminoacyl-tRNA synthetase family. Zn(2+) is required as a cofactor.

Its subcellular location is the cytoplasm. It catalyses the reaction tRNA(Ala) + L-alanine + ATP = L-alanyl-tRNA(Ala) + AMP + diphosphate. In terms of biological role, catalyzes the attachment of alanine to tRNA(Ala) in a two-step reaction: alanine is first activated by ATP to form Ala-AMP and then transferred to the acceptor end of tRNA(Ala). Also edits incorrectly charged Ser-tRNA(Ala) and Gly-tRNA(Ala) via its editing domain. In Campylobacter fetus subsp. fetus (strain 82-40), this protein is Alanine--tRNA ligase.